Here is a 405-residue protein sequence, read N- to C-terminus: Squamosa promoter-binding-like protein 6 (405 aa).

The segment at 121-198 adopts an SBP-type zinc-finger fold; the sequence is NPLCQVYGCS…AGHNERRRKP (78 aa). The Zn(2+) site is built by Cys124, Cys129, Cys146, His149, Cys165, Cys168, His172, and Cys184. Positions 181-197 match the Bipartite nuclear localization signal motif; it reads KRSCRRRLAGHNERRRK.

Zn(2+) is required as a cofactor.

It localises to the nucleus. Its function is as follows. Trans-acting factor that binds specifically to the consensus nucleotide sequence 5'-TNCGTACAA-3'. The protein is Squamosa promoter-binding-like protein 6 (SPL6) of Arabidopsis thaliana (Mouse-ear cress).